The primary structure comprises 362 residues: Probable dual-specificity RNA methyltransferase RlmN (362 aa).

Residue E105 is the Proton acceptor of the active site. The Radical SAM core domain maps to 111–344; it reads HEYGNSICVT…VTIRREQGHD (234 aa). C118 and C349 form a disulfide bridge. [4Fe-4S] cluster is bound by residues C125, C129, and C132. Residues 175–176, S207, 230–232, and N306 each bind S-adenosyl-L-methionine; these read GE and SLH. Residue C349 is the S-methylcysteine intermediate of the active site.

This sequence belongs to the radical SAM superfamily. RlmN family. [4Fe-4S] cluster serves as cofactor.

It localises to the cytoplasm. It catalyses the reaction adenosine(2503) in 23S rRNA + 2 reduced [2Fe-2S]-[ferredoxin] + 2 S-adenosyl-L-methionine = 2-methyladenosine(2503) in 23S rRNA + 5'-deoxyadenosine + L-methionine + 2 oxidized [2Fe-2S]-[ferredoxin] + S-adenosyl-L-homocysteine. The enzyme catalyses adenosine(37) in tRNA + 2 reduced [2Fe-2S]-[ferredoxin] + 2 S-adenosyl-L-methionine = 2-methyladenosine(37) in tRNA + 5'-deoxyadenosine + L-methionine + 2 oxidized [2Fe-2S]-[ferredoxin] + S-adenosyl-L-homocysteine. Specifically methylates position 2 of adenine 2503 in 23S rRNA and position 2 of adenine 37 in tRNAs. The protein is Probable dual-specificity RNA methyltransferase RlmN of Bacillus mycoides (strain KBAB4) (Bacillus weihenstephanensis).